Reading from the N-terminus, the 278-residue chain is 4-deoxy-L-threo-5-hexosulose-uronate ketol-isomerase (278 aa).

Residues histidine 196, histidine 198, glutamate 203, and histidine 245 each coordinate Zn(2+).

The protein belongs to the KduI family. Zn(2+) is required as a cofactor.

The enzyme catalyses 5-dehydro-4-deoxy-D-glucuronate = 3-deoxy-D-glycero-2,5-hexodiulosonate. It participates in glycan metabolism; pectin degradation; 2-dehydro-3-deoxy-D-gluconate from pectin: step 4/5. Functionally, catalyzes the isomerization of 5-dehydro-4-deoxy-D-glucuronate to 3-deoxy-D-glycero-2,5-hexodiulosonate. The chain is 4-deoxy-L-threo-5-hexosulose-uronate ketol-isomerase from Salmonella heidelberg (strain SL476).